The chain runs to 161 residues: MTRGPIFLNVGISYGLPRTKLPAAVSFRKWVAATLQGRIRKADLAIRIVDEKEGRALNYHYRNKDYATNVLSFPAQLPEPFPKALKIPLLGDIVMCAPVIAREATEQGKSLSAHYAHLTVHGTLHLLGWNHEDHQEADAMEQLEREILANLGISDPYLGEY.

Zn(2+)-binding residues include histidine 121, histidine 125, and histidine 131.

It belongs to the endoribonuclease YbeY family. The cofactor is Zn(2+).

The protein localises to the cytoplasm. Functionally, single strand-specific metallo-endoribonuclease involved in late-stage 70S ribosome quality control and in maturation of the 3' terminus of the 16S rRNA. The protein is Endoribonuclease YbeY of Xylella fastidiosa (strain M23).